The primary structure comprises 933 residues: Valine--tRNA ligase (933 aa).

Positions 58 to 68 (PNVTGSLHMGH) match the 'HIGH' region motif. The 'KMSKS' region signature appears at 556–560 (KMSKS). K559 provides a ligand contact to ATP. 2 coiled-coil regions span residues 807 to 833 (VTKN…ANKV) and 864 to 933 (EGLV…LGLK).

The protein belongs to the class-I aminoacyl-tRNA synthetase family. ValS type 1 subfamily. Monomer.

The protein localises to the cytoplasm. The catalysed reaction is tRNA(Val) + L-valine + ATP = L-valyl-tRNA(Val) + AMP + diphosphate. In terms of biological role, catalyzes the attachment of valine to tRNA(Val). As ValRS can inadvertently accommodate and process structurally similar amino acids such as threonine, to avoid such errors, it has a 'posttransfer' editing activity that hydrolyzes mischarged Thr-tRNA(Val) in a tRNA-dependent manner. The protein is Valine--tRNA ligase of Prochlorococcus marinus (strain SARG / CCMP1375 / SS120).